A 619-amino-acid chain; its full sequence is 1-deoxy-D-xylulose-5-phosphate synthase (619 aa).

Thiamine diphosphate-binding positions include H80 and G121–S123. D152 is a binding site for Mg(2+). Thiamine diphosphate contacts are provided by residues G153–A154, N181, Y288, and E370. N181 is a Mg(2+) binding site.

It belongs to the transketolase family. DXPS subfamily. As to quaternary structure, homodimer. It depends on Mg(2+) as a cofactor. Requires thiamine diphosphate as cofactor.

It carries out the reaction D-glyceraldehyde 3-phosphate + pyruvate + H(+) = 1-deoxy-D-xylulose 5-phosphate + CO2. Its pathway is metabolic intermediate biosynthesis; 1-deoxy-D-xylulose 5-phosphate biosynthesis; 1-deoxy-D-xylulose 5-phosphate from D-glyceraldehyde 3-phosphate and pyruvate: step 1/1. Its function is as follows. Catalyzes the acyloin condensation reaction between C atoms 2 and 3 of pyruvate and glyceraldehyde 3-phosphate to yield 1-deoxy-D-xylulose-5-phosphate (DXP). The sequence is that of 1-deoxy-D-xylulose-5-phosphate synthase from Yersinia pestis (strain Pestoides F).